The sequence spans 607 residues: Matrix metalloproteinase-16 (607 aa).

The first 31 residues, 1–31, serve as a signal peptide directing secretion; that stretch reads MILLTFSTGRRLDFVHHSGVFFLQTLLWILC. A propeptide spanning residues 32 to 119 is cleaved from the precursor; that stretch reads ATVCGTEQYF…SSKFHIRRKR (88 aa). The N-linked (GlcNAc...) asparagine glycan is linked to Asn83. Residues 99–106 carry the Cysteine switch motif; the sequence is PRCGVPDQ. Residue Cys101 participates in Zn(2+) binding. Over 120 to 564 the chain is Extracellular; sequence YALTGQKWQH…LDNTASTVKA (445 aa). Residue Asp183 participates in Ca(2+) binding. The Zn(2+) site is built by His193 and Asp195. The Ca(2+) site is built by Asp200, Gly201, Gly203, and Phe205. His208 is a Zn(2+) binding site. Residues Gly215, Gly217, and Asp219 each coordinate Ca(2+). Position 221 (His221) interacts with Zn(2+). The Ca(2+) site is built by Asp223 and Glu226. Residue His246 coordinates Zn(2+). Glu247 is a catalytic residue. The Zn(2+) site is built by His250 and His256. The disordered stretch occupies residues 281 to 340; sequence DDLQGIQKIYGPPDKIPPPTRPLPTVPPHRSIPPADPRKNDRPKPPRPPTGRPSYPGAKP. Over residues 294–315 the composition is skewed to pro residues; it reads DKIPPPTRPLPTVPPHRSIPPA. Hemopexin repeat units follow at residues 340-388, 389-434, 436-484, and 485-532; these read PNIC…WRGL, PPSI…GSGI, PHGI…KGIP, and ESPQ…FMGC. A disulfide bond links Cys343 and Cys532. Residues 565 to 585 traverse the membrane as a helical segment; that stretch reads IAIVIPCILALCLLVLVYTVF. Over 586 to 607 the chain is Cytoplasmic; it reads QFKRKGTPRHILYCKRSMQEWV.

This sequence belongs to the peptidase M10A family. Interacts with CSPG4 through CSPG4 chondroitin sulfate glycosaminoglycan. The cofactor is Zn(2+). Requires Ca(2+) as cofactor. Post-translationally, the precursor is cleaved by a furin endopeptidase. In terms of tissue distribution, expressed in heart, brain, placenta, ovary and small intestine. Isoform Short is found in the ovary.

Its subcellular location is the cell membrane. The protein localises to the secreted. The protein resides in the extracellular space. It localises to the extracellular matrix. It is found in the cell surface. With respect to regulation, TIMP-2 shows little inhibitory activity compared to TIMP-1. TIMP-1 seems to have less binding affinity than TIMP-2 for the short isoform. Endopeptidase that degrades various components of the extracellular matrix, such as collagen type III and fibronectin. Activates progelatinase A. Involved in the matrix remodeling of blood vessels. Isoform short cleaves fibronectin and also collagen type III, but at lower rate. It has no effect on type I, II, IV and V collagen. However, upon interaction with CSPG4, it may be involved in degradation and invasion of type I collagen by melanoma cells. The sequence is that of Matrix metalloproteinase-16 from Homo sapiens (Human).